We begin with the raw amino-acid sequence, 190 residues long: Peptidyl-tRNA hydrolase (190 aa).

TRNA is bound at residue tyrosine 19. Histidine 24 acts as the Proton acceptor in catalysis. Residues tyrosine 72, asparagine 74, and asparagine 121 each contribute to the tRNA site.

It belongs to the PTH family.

It localises to the mitochondrion. It carries out the reaction an N-acyl-L-alpha-aminoacyl-tRNA + H2O = an N-acyl-L-amino acid + a tRNA + H(+). Functionally, peptidyl-tRNA hydrolase involved in the recycling of tRNA-Lys from diacetyl-lysyl-tRNA-Lys and is important for mitochondrial function. The chain is Peptidyl-tRNA hydrolase (PTH1) from Saccharomyces cerevisiae (strain ATCC 204508 / S288c) (Baker's yeast).